Consider the following 372-residue polypeptide: Glutamate 5-kinase (372 aa).

Residue Lys14 participates in ATP binding. Ser54, Asp141, and Asn153 together coordinate substrate. ATP is bound at residue 173–174 (TD). The PUA domain maps to 280 to 358 (RGHVVIDAGA…GEIEAVLGYM (79 aa)).

This sequence belongs to the glutamate 5-kinase family.

The protein resides in the cytoplasm. It carries out the reaction L-glutamate + ATP = L-glutamyl 5-phosphate + ADP. It functions in the pathway amino-acid biosynthesis; L-proline biosynthesis; L-glutamate 5-semialdehyde from L-glutamate: step 1/2. In terms of biological role, catalyzes the transfer of a phosphate group to glutamate to form L-glutamate 5-phosphate. The sequence is that of Glutamate 5-kinase from Burkholderia thailandensis (strain ATCC 700388 / DSM 13276 / CCUG 48851 / CIP 106301 / E264).